The sequence spans 2813 residues: A-kinase anchor protein 13 (2813 aa).

Disordered regions lie at residues 304-400 and 415-439; these read AQDP…QDSC and LSSC…QESL. Polar residues predominate over residues 427 to 439; the sequence is TKSSGMPTDQESL. Residues 494-516 form an important for interaction with PRKAR2A region; the sequence is WKNVLQGGESTKERFENSNIGTA. 3 disordered regions span residues 539–585, 632–653, and 690–726; these read AASS…VDQN, HQNS…SPIC, and SEST…RDTQ. Residues 561–577 are compositionally biased toward basic and acidic residues; that stretch reads STEKTAETETSRSREES. Polar residues predominate over residues 690–702; sequence SESTTARQPSSQD. Phosphoserine is present on serine 790. 2 disordered regions span residues 805-856 and 939-965; these read VPSQ…AAEL and ENAL…QFHE. The residue at position 815 (threonine 815) is a Phosphothreonine. The segment covering 835-844 has biased composition (basic and acidic residues); the sequence is PDTRPLEDRA. Composition is skewed to polar residues over residues 847–856 and 939–948; these read LSTSSTAAEL and ENALSSGTLQ. A Phosphothreonine modification is found at threonine 953. Serine 983 bears the Phosphoserine mark. Disordered regions lie at residues 1431–1455 and 1467–1542; these read GVLK…DSII and DITG…DSIT. A compositionally biased stretch (low complexity) spans 1467–1478; the sequence is DITGSSSSTDDT. Residues 1488 to 1497 are compositionally biased toward polar residues; that stretch reads GSDVSLSQIL. 5 positions are modified to phosphoserine: serine 1489, serine 1507, serine 1540, serine 1565, and serine 1602. Residues 1525-1540 show a composition bias toward acidic residues; that stretch reads SEPADPGDVEEEEMDS. The important for interaction with MAP2K3 stretch occupies residues 1585–1715; sequence RVLGDVVRRP…HSTFHNTSAN (131 aa). Positions 1601-1638 are disordered; that stretch reads FSLEGLTGGAGVGNKPSSSLEVSSANAEELRHPFSGEE. The segment covering 1615 to 1626 has biased composition (polar residues); that stretch reads KPSSSLEVSSAN. Basic and acidic residues predominate over residues 1628 to 1638; that stretch reads EELRHPFSGEE. Phosphoserine is present on residues serine 1642, serine 1645, and serine 1647. The residue at position 1670 (lysine 1670) is an N6-methyllysine. The interval 1755-1793 is disordered; the sequence is KMSSSKKSKEKEKEKDKIKEKEKDSKDKEKDKKTVNGHT. The stretch at 1758–1790 forms a coiled coil; sequence SSKKSKEKEKEKDKIKEKEKDSKDKEKDKKTVN. Basic and acidic residues predominate over residues 1761-1788; it reads KSKEKEKEKDKIKEKEKDSKDKEKDKKT. Residues 1791 to 1838 form a Phorbol-ester/DAG-type zinc finger; the sequence is GHTFSSIPVVGPISCSQCMKPFTNKDAYTCANCSAFVHKGCRESLASC. 3 positions are modified to phosphoserine: serine 1876, serine 1895, and serine 1929. The segment at 1919–2813 is interaction with ESR1; that stretch reads MSNTWKFLSH…VSAEGEEIFC (895 aa). Threonine 1930 is subject to Phosphothreonine. Serine 1932 and serine 1945 each carry phosphoserine. The 198-residue stretch at 1994-2191 folds into the DH domain; that stretch reads KRQEVIYELM…KDVIGAVDSK (198 aa). Positions 2231 to 2333 constitute a PH domain; it reads KLVRDGSVFL…WIQIIQDTIN (103 aa). Residues serine 2345 and serine 2398 each carry the phosphoserine modification. Residues 2345–2381 are a coiled coil; that stretch reads SENEEEKKMLDTRARELKEQLHQKDQKILLLLEEKEM. The interval 2466–2502 is disordered; sequence ETFGGFDSHQMNASKGGEKEEGDDGQDLRRTESDSGL. The residue at position 2467 (threonine 2467) is a Phosphothreonine. Residue serine 2473 is modified to Phosphoserine. Positions 2491–2502 are enriched in basic and acidic residues; sequence QDLRRTESDSGL. Serine 2563 and serine 2566 each carry phosphoserine. A coiled-coil region spans residues 2568–2683; sequence LIEQEKQRSL…RLSQRQTERD (116 aa). Positions 2665-2684 are enriched in basic and acidic residues; that stretch reads QEQLRREAERLSQRQTERDL. Residues 2665 to 2813 are disordered; sequence QEQLRREAER…VSAEGEEIFC (149 aa). Serine 2703, serine 2709, and serine 2728 each carry phosphoserine. The segment covering 2720-2735 has biased composition (polar residues); the sequence is SLDSELSVSPKRNSIS. Low complexity predominate over residues 2760 to 2771; sequence QSQAPASTSAST.

As to quaternary structure, interacts with the cAMP-dependent protein kinase (PKA) holoenzyme and with the regulatory subunit PRKAR2A. Interacts with RHOA. Also interacts with RHOB and RHOC. Identified in a ternary complex with RHOA and PRKAR2A. Identified in a complex with NR3C1 and RHOA. Interacts with BRAF and KSR1. Identified in a complex with BRAF and KSR1. Component of a signaling complex containing at least AKAP13, PKN1, MAPK14, ZAK and MAP2K3. Within this complex, AKAP13 interacts directly with PKN1, which in turn recruits MAPK14, MAP2K3 and ZAK. Interacts (phosphorylated form) with YWHAB and YWHAZ. Interaction with YWHAB inhibits activation of RHOA, interferes with PKN1 binding and activation of MAP kinases. Interacts with GNA12. Interacts with IKBKB. Interacts with ESR1, THRA, PPARA and NME2. Interacts (via the C-terminal domain after the PH domain) with MEF2C and RXRB. Interacts (via the C-terminal domain after the PH domain) with PRKD1. In terms of tissue distribution, detected in mammary gland. Detected in heart (at protein level). Expressed as a 5.3 kb transcript in hematopoietic cells, skeletal muscle, lung, heart, estrogen-responsive reproductive tissues, including breast ductal epithelium. Also found in testis and breast cancer cell lines. Predominantly expressed as a 10 kb transcript in the heart and at lower levels in the lung, placenta, kidney, pancreas, skeletal muscle and liver. Transcripts of between 6-9 kb are also expressed in myeloid and lymphoid lineages, a variety of epithelial tissues, and in skeletal muscle.

It localises to the cytoplasm. It is found in the cytosol. Its subcellular location is the cell cortex. The protein localises to the nucleus. The protein resides in the membrane. Scaffold protein that plays an important role in assembling signaling complexes downstream of several types of G protein-coupled receptors. Activates RHOA in response to signaling via G protein-coupled receptors via its function as Rho guanine nucleotide exchange factor. May also activate other Rho family members. Part of a kinase signaling complex that links ADRA1A and ADRA1B adrenergic receptor signaling to the activation of downstream p38 MAP kinases, such as MAPK11 and MAPK14. Part of a signaling complex that links ADRA1B signaling to the activation of RHOA and IKBKB/IKKB, leading to increased NF-kappa-B transcriptional activity. Part of a RHOA-dependent signaling cascade that mediates responses to lysophosphatidic acid (LPA), a signaling molecule that activates G-protein coupled receptors and potentiates transcriptional activation of the glucocorticoid receptor NR3C1. Part of a signaling cascade that stimulates MEF2C-dependent gene expression in response to lysophosphatidic acid (LPA). Part of a signaling pathway that activates MAPK11 and/or MAPK14 and leads to increased transcription activation of the estrogen receptors ESR1 and ESR2. Part of a signaling cascade that links cAMP and EGFR signaling to BRAF signaling and to PKA-mediated phosphorylation of KSR1, leading to the activation of downstream MAP kinases, such as MAPK1 or MAPK3. Functions as a scaffold protein that anchors cAMP-dependent protein kinase (PKA) and PRKD1. This promotes activation of PRKD1, leading to increased phosphorylation of HDAC5 and ultimately cardiomyocyte hypertrophy. Has no guanine nucleotide exchange activity on CDC42, Ras or Rac. Required for normal embryonic heart development, and in particular for normal sarcomere formation in the developing cardiomyocytes. Plays a role in cardiomyocyte growth and cardiac hypertrophy in response to activation of the beta-adrenergic receptor by phenylephrine or isoproterenol. Required for normal adaptive cardiac hypertrophy in response to pressure overload. Plays a role in osteogenesis. The protein is A-kinase anchor protein 13 (AKAP13) of Homo sapiens (Human).